The following is a 699-amino-acid chain: Proline-rich receptor-like protein kinase PERK7 (699 aa).

Residues 1–167 are disordered; sequence MAEGQSPENS…TSNSGSNSSS (167 aa). The Extracellular segment spans residues 1-172; that stretch reads MAEGQSPENS…SNSSSNDGLN (172 aa). 2 stretches are compositionally biased toward pro residues: residues 9 to 23 and 43 to 68; these read NSPPAPPPPSPPSPP and SPPPPSSPDIAPPPQQQQESPPPPLP. An N-linked (GlcNAc...) asparagine glycan is attached at Asn70. A compositionally biased stretch (low complexity) spans 100–121; that stretch reads PPQQSDNNGNKGNNNENNKGND. Asn131 is a glycosylation site (N-linked (GlcNAc...) asparagine). A compositionally biased stretch (polar residues) spans 148–158; it reads HSQPRSLAPPT. N-linked (GlcNAc...) asparagine glycosylation is present at Asn164. A helical membrane pass occupies residues 173 to 193; sequence IGAVIGLVAAAGILFIVMILL. The Cytoplasmic portion of the chain corresponds to 194-699; it reads CVCCFRKKKK…SKTTTTNRGI (506 aa). Position 325 is a phosphothreonine (Thr325). Residues 336-615 form the Protein kinase domain; it reads FSKDRLLGQG…VRTLEGDASL (280 aa). Residues 342–350 and Lys364 each bind ATP; that span reads LGQGGFGYV. Phosphotyrosine is present on Tyr410. The active-site Proton acceptor is Asp461. Residues Ser465 and Ser494 each carry the phosphoserine modification. 2 positions are modified to phosphothreonine: Thr495 and Thr500. Residue Tyr508 is modified to Phosphotyrosine. 2 disordered regions span residues 609-639 and 658-699; these read LEGDASLDDLDDGVKPKQSSSGGEGSSDYEM and DYGA…NRGI. Polar residues predominate over residues 687–699; sequence GSTSKTTTTNRGI.

This sequence belongs to the protein kinase superfamily. Ser/Thr protein kinase family. As to expression, mostly expressed in flower buds.

Its subcellular location is the cell membrane. It carries out the reaction L-seryl-[protein] + ATP = O-phospho-L-seryl-[protein] + ADP + H(+). The catalysed reaction is L-threonyl-[protein] + ATP = O-phospho-L-threonyl-[protein] + ADP + H(+). The sequence is that of Proline-rich receptor-like protein kinase PERK7 (PERK7) from Arabidopsis thaliana (Mouse-ear cress).